A 541-amino-acid chain; its full sequence is Synaptotagmin-1 (541 aa).

Over 1 to 11 the chain is Extracellular; that stretch reads MGFFSTILGFC. The helical transmembrane segment at 12-32 threads the bilayer; sequence GFGVGISLGLVIGYVLFVYLL. Topologically, residues 33–541 are cytoplasmic; it reads PNDVKDPEIR…QIELEWRTAS (509 aa). The 183-residue stretch at 67–249 folds into the SMP-LTD domain; it reads DFDRVDWINR…WPKTLVVPIL (183 aa). A phospholipid binding region spans residues 227-509; that stretch reads QEQIKDQVAN…TLGYVDIPVV (283 aa). C2 domains are found at residues 240–362 and 401–521; these read WPKT…AFTL and GFEE…NQKF. Positions 276, 282, 332, and 334 each coordinate Ca(2+).

It belongs to the synaptotagmin family. As to quaternary structure, interacts with cabbage leaf curl virus (CaLCuV) BC1 protein and tobacco mosaic virus (TMV) MP protein. Interacts with ROSY1. The cofactor is Ca(2+). As to expression, expressed in roots, shoots, rosette and cauline leaves, inflorescences, and siliques. In roots, expressed in vascular bundle, epidermis, the differential zone of the tips of root hairs, and the quiescent center and columella of root tips.

It is found in the cell membrane. The protein localises to the endosome membrane. Functionally, plays an important role in maintaining plasma membrane integrity during freezing and osmotic stresses. May function in membrane resealing during calcium-dependent freezing tolerance. May regulate endocytosis and endosome recycling at the plasma membrane and cell-to-cell trafficking of cabbage leaf curl virus (CaLCuV) and tobacco mosaic virus (TMV) movement proteins via plasmodesmata. The polypeptide is Synaptotagmin-1 (SYT1) (Arabidopsis thaliana (Mouse-ear cress)).